Consider the following 395-residue polypeptide: S-adenosylmethionine synthase (395 aa).

ATP is bound at residue histidine 19. Aspartate 21 contributes to the Mg(2+) binding site. K(+) is bound at residue glutamate 47. Positions 60 and 103 each coordinate L-methionine. Positions 103–113 (QSPDIAQGVNS) are flexible loop. ATP-binding positions include 170–172 (DNK), 236–237 (KF), aspartate 245, 251–252 (RK), alanine 268, and lysine 272. L-methionine is bound at residue aspartate 245. An L-methionine-binding site is contributed by lysine 276.

The protein belongs to the AdoMet synthase family. As to quaternary structure, homotetramer; dimer of dimers. The cofactor is Mg(2+). K(+) is required as a cofactor.

The protein resides in the cytoplasm. The catalysed reaction is L-methionine + ATP + H2O = S-adenosyl-L-methionine + phosphate + diphosphate. It participates in amino-acid biosynthesis; S-adenosyl-L-methionine biosynthesis; S-adenosyl-L-methionine from L-methionine: step 1/1. In terms of biological role, catalyzes the formation of S-adenosylmethionine (AdoMet) from methionine and ATP. The overall synthetic reaction is composed of two sequential steps, AdoMet formation and the subsequent tripolyphosphate hydrolysis which occurs prior to release of AdoMet from the enzyme. In Rhodopirellula baltica (strain DSM 10527 / NCIMB 13988 / SH1), this protein is S-adenosylmethionine synthase.